We begin with the raw amino-acid sequence, 386 residues long: Alkanesulfonate monooxygenase (386 aa).

It belongs to the SsuD family.

It carries out the reaction an alkanesulfonate + FMNH2 + O2 = an aldehyde + FMN + sulfite + H2O + 2 H(+). In terms of biological role, catalyzes the desulfonation of aliphatic sulfonates. In Paraburkholderia phytofirmans (strain DSM 17436 / LMG 22146 / PsJN) (Burkholderia phytofirmans), this protein is Alkanesulfonate monooxygenase.